The chain runs to 244 residues: ATP synthase subunit a, chloroplastic (244 aa).

5 consecutive transmembrane segments (helical) span residues Gln35–Val55, Val92–Leu112, Ile131–Thr151, Leu196–Leu216, and Gly217–Gly237.

Belongs to the ATPase A chain family. F-type ATPases have 2 components, CF(1) - the catalytic core - and CF(0) - the membrane proton channel. CF(1) has five subunits: alpha(3), beta(3), gamma(1), delta(1), epsilon(1). CF(0) has four main subunits: a, b, b' and c.

Its subcellular location is the plastid. The protein resides in the chloroplast thylakoid membrane. Functionally, key component of the proton channel; it plays a direct role in the translocation of protons across the membrane. The chain is ATP synthase subunit a, chloroplastic from Coffea arabica (Arabian coffee).